The chain runs to 146 residues: Deoxyuridine 5'-triphosphate nucleotidohydrolase (146 aa).

Substrate contacts are provided by residues 66–68 (RSG), N79, 83–85 (TVD), and K93.

Belongs to the dUTPase family. Mg(2+) serves as cofactor.

It carries out the reaction dUTP + H2O = dUMP + diphosphate + H(+). It participates in pyrimidine metabolism; dUMP biosynthesis; dUMP from dCTP (dUTP route): step 2/2. Functionally, this enzyme is involved in nucleotide metabolism: it produces dUMP, the immediate precursor of thymidine nucleotides and it decreases the intracellular concentration of dUTP so that uracil cannot be incorporated into DNA. The sequence is that of Deoxyuridine 5'-triphosphate nucleotidohydrolase from Fusobacterium nucleatum subsp. nucleatum (strain ATCC 25586 / DSM 15643 / BCRC 10681 / CIP 101130 / JCM 8532 / KCTC 2640 / LMG 13131 / VPI 4355).